The following is a 347-amino-acid chain: Phenylalanine--tRNA ligase alpha subunit (347 aa).

Glutamate 261 is a binding site for Mg(2+).

It belongs to the class-II aminoacyl-tRNA synthetase family. Phe-tRNA synthetase alpha subunit type 1 subfamily. Tetramer of two alpha and two beta subunits. Requires Mg(2+) as cofactor.

The protein resides in the cytoplasm. The enzyme catalyses tRNA(Phe) + L-phenylalanine + ATP = L-phenylalanyl-tRNA(Phe) + AMP + diphosphate + H(+). The sequence is that of Phenylalanine--tRNA ligase alpha subunit from Streptococcus uberis (strain ATCC BAA-854 / 0140J).